The sequence spans 488 residues: Ribulose bisphosphate carboxylase large chain (488 aa).

Residues N127 and T177 each contribute to the substrate site. K179 serves as the catalytic Proton acceptor. K181 provides a ligand contact to substrate. Mg(2+)-binding residues include K205, D207, and E208. K205 bears the N6-carboxylysine mark. The Proton acceptor role is filled by H297. Residues R298, H330, and S382 each contribute to the substrate site.

This sequence belongs to the RuBisCO large chain family. Type I subfamily. As to quaternary structure, heterohexadecamer of 8 large chains and 8 small chains. It depends on Mg(2+) as a cofactor.

The protein resides in the plastid. It is found in the chloroplast. It catalyses the reaction 2 (2R)-3-phosphoglycerate + 2 H(+) = D-ribulose 1,5-bisphosphate + CO2 + H2O. It carries out the reaction D-ribulose 1,5-bisphosphate + O2 = 2-phosphoglycolate + (2R)-3-phosphoglycerate + 2 H(+). In terms of biological role, ruBisCO catalyzes two reactions: the carboxylation of D-ribulose 1,5-bisphosphate, the primary event in carbon dioxide fixation, as well as the oxidative fragmentation of the pentose substrate in the photorespiration process. Both reactions occur simultaneously and in competition at the same active site. This Guillardia theta (Cryptophyte) protein is Ribulose bisphosphate carboxylase large chain.